A 505-amino-acid chain; its full sequence is Glycerol kinase (505 aa).

ADP is bound at residue Thr-14. Residues Thr-14, Thr-15, and Ser-16 each contribute to the ATP site. Thr-14 serves as a coordination point for sn-glycerol 3-phosphate. Arg-18 serves as a coordination point for ADP. The sn-glycerol 3-phosphate site is built by Arg-84, Glu-85, Tyr-136, and Asp-246. The glycerol site is built by Arg-84, Glu-85, Tyr-136, Asp-246, and Gln-247. The ADP site is built by Thr-268 and Gly-311. ATP-binding residues include Thr-268, Gly-311, Gln-315, and Gly-412. Residues Gly-412 and Asn-416 each contribute to the ADP site.

This sequence belongs to the FGGY kinase family.

It carries out the reaction glycerol + ATP = sn-glycerol 3-phosphate + ADP + H(+). The protein operates within polyol metabolism; glycerol degradation via glycerol kinase pathway; sn-glycerol 3-phosphate from glycerol: step 1/1. Its activity is regulated as follows. Inhibited by fructose 1,6-bisphosphate (FBP). Key enzyme in the regulation of glycerol uptake and metabolism. Catalyzes the phosphorylation of glycerol to yield sn-glycerol 3-phosphate. In Vibrio cholerae serotype O1 (strain M66-2), this protein is Glycerol kinase.